The following is a 602-amino-acid chain: 4-hydroxy-3-methylbut-2-en-1-yl diphosphate synthase (flavodoxin) (602 aa).

Residues Cys508, Cys511, Cys543, and Glu550 each contribute to the [4Fe-4S] cluster site.

Belongs to the IspG family. The cofactor is [4Fe-4S] cluster.

It carries out the reaction (2E)-4-hydroxy-3-methylbut-2-enyl diphosphate + oxidized [flavodoxin] + H2O + 2 H(+) = 2-C-methyl-D-erythritol 2,4-cyclic diphosphate + reduced [flavodoxin]. Its pathway is isoprenoid biosynthesis; isopentenyl diphosphate biosynthesis via DXP pathway; isopentenyl diphosphate from 1-deoxy-D-xylulose 5-phosphate: step 5/6. Its function is as follows. Converts 2C-methyl-D-erythritol 2,4-cyclodiphosphate (ME-2,4cPP) into 1-hydroxy-2-methyl-2-(E)-butenyl 4-diphosphate. This Chlamydia trachomatis serovar L2 (strain ATCC VR-902B / DSM 19102 / 434/Bu) protein is 4-hydroxy-3-methylbut-2-en-1-yl diphosphate synthase (flavodoxin).